The primary structure comprises 156 residues: 6,7-dimethyl-8-ribityllumazine synthase (156 aa).

5-amino-6-(D-ribitylamino)uracil contacts are provided by residues tryptophan 33, 64-66, and 86-88; these read SVE and VIL. Position 91 to 92 (91 to 92) interacts with (2S)-2-hydroxy-3-oxobutyl phosphate; that stretch reads ET. The Proton donor role is filled by histidine 94. Isoleucine 119 contributes to the 5-amino-6-(D-ribitylamino)uracil binding site. Arginine 133 provides a ligand contact to (2S)-2-hydroxy-3-oxobutyl phosphate.

The protein belongs to the DMRL synthase family.

The enzyme catalyses (2S)-2-hydroxy-3-oxobutyl phosphate + 5-amino-6-(D-ribitylamino)uracil = 6,7-dimethyl-8-(1-D-ribityl)lumazine + phosphate + 2 H2O + H(+). The protein operates within cofactor biosynthesis; riboflavin biosynthesis; riboflavin from 2-hydroxy-3-oxobutyl phosphate and 5-amino-6-(D-ribitylamino)uracil: step 1/2. In terms of biological role, catalyzes the formation of 6,7-dimethyl-8-ribityllumazine by condensation of 5-amino-6-(D-ribitylamino)uracil with 3,4-dihydroxy-2-butanone 4-phosphate. This is the penultimate step in the biosynthesis of riboflavin. The chain is 6,7-dimethyl-8-ribityllumazine synthase from Tropheryma whipplei (strain TW08/27) (Whipple's bacillus).